The sequence spans 103 residues: Small ribosomal subunit protein uS10 (103 aa).

This sequence belongs to the universal ribosomal protein uS10 family. As to quaternary structure, part of the 30S ribosomal subunit.

Functionally, involved in the binding of tRNA to the ribosomes. The protein is Small ribosomal subunit protein uS10 of Xanthomonas axonopodis pv. citri (strain 306).